A 77-amino-acid polypeptide reads, in one-letter code: NAD(P)H-quinone oxidoreductase subunit L (77 aa).

2 helical membrane-spanning segments follow: residues 12 to 32 and 47 to 67; these read LIAYIGIIFTYLLVIPLLLFY and LGIYGLVFLFFPGLILFSPFL.

Belongs to the complex I NdhL subunit family. As to quaternary structure, NDH-1 can be composed of about 15 different subunits; different subcomplexes with different compositions have been identified which probably have different functions.

The protein localises to the cellular thylakoid membrane. The catalysed reaction is a plastoquinone + NADH + (n+1) H(+)(in) = a plastoquinol + NAD(+) + n H(+)(out). The enzyme catalyses a plastoquinone + NADPH + (n+1) H(+)(in) = a plastoquinol + NADP(+) + n H(+)(out). Functionally, NDH-1 shuttles electrons from an unknown electron donor, via FMN and iron-sulfur (Fe-S) centers, to quinones in the respiratory and/or the photosynthetic chain. The immediate electron acceptor for the enzyme in this species is believed to be plastoquinone. Couples the redox reaction to proton translocation, and thus conserves the redox energy in a proton gradient. Cyanobacterial NDH-1 also plays a role in inorganic carbon-concentration. This is NAD(P)H-quinone oxidoreductase subunit L from Prochlorococcus marinus (strain AS9601).